The primary structure comprises 155 residues: DNA polymerase epsilon subunit 4 (155 aa).

Composition is skewed to acidic residues over residues M1–D16 and E24–E48. Residues M1 to T76 are disordered. Polar residues predominate over residues A49–N65.

As to quaternary structure, component of the DNA polymerase epsilon complex consisting of four subunits: the catalytic subunit PolE1/DNApol-epsilon255 and the accessory subunits PolE2/DNApol-epsilon58, Chrac-14/DNApolE3 and PolE4/Mes4.

Its subcellular location is the nucleus. Its function is as follows. Accessory component of the DNA polymerase epsilon complex. Participates in DNA repair and in chromosomal DNA replication. Has a role in cell cycle progression. Required for wing morphogenesis. The chain is DNA polymerase epsilon subunit 4 from Drosophila melanogaster (Fruit fly).